A 207-amino-acid polypeptide reads, in one-letter code: dTTP/UTP pyrophosphatase (207 aa).

Residue D87 is the Proton acceptor of the active site.

It belongs to the Maf family. YhdE subfamily. A divalent metal cation serves as cofactor.

It localises to the cytoplasm. The enzyme catalyses dTTP + H2O = dTMP + diphosphate + H(+). It catalyses the reaction UTP + H2O = UMP + diphosphate + H(+). Functionally, nucleoside triphosphate pyrophosphatase that hydrolyzes dTTP and UTP. May have a dual role in cell division arrest and in preventing the incorporation of modified nucleotides into cellular nucleic acids. In Nitrosomonas europaea (strain ATCC 19718 / CIP 103999 / KCTC 2705 / NBRC 14298), this protein is dTTP/UTP pyrophosphatase.